Consider the following 709-residue polypeptide: Solute carrier family 15 member 1 (709 aa).

Residues 1 to 21 (MGMSKSRGCFGYPLSIFFIVV) form a helical membrane-spanning segment. The Extracellular portion of the chain corresponds to 22–53 (NEFCERFSYYGMRALLVLYFRNFLGWDDNLST). Asn-50 is a glycosylation site (N-linked (GlcNAc...) asparagine). Residues 54 to 74 (AIYHTFVALCYLTPILGALIA) form a helical membrane-spanning segment. At 75–82 (DSWLGKFK) the chain is on the cytoplasmic side. The chain crosses the membrane as a helical span at residues 83-103 (TIVSLSIVYTIGQAVISVSSI). The Extracellular portion of the chain corresponds to 104 to 118 (NDLTDHDHNGSPDSL). A helical transmembrane segment spans residues 119 to 139 (PVHVALSMVGLALIALGTGGI). Residues 140–161 (KPCVSAFGGDQFEEGQEKQRNR) are Cytoplasmic-facing. A helical membrane pass occupies residues 162-182 (FFSIFYLAINGGSLLSTIITP). At 183–198 (ILRVQQCGIHSQQACY) the chain is on the extracellular side. A helical membrane pass occupies residues 199-219 (PLAFGVPAALMAVALIVFVLG). Residues 220–276 (SGMYKKFQPQGNIMGKVAKCIGFAIKNRFRHRSKAYPKREHWLDWAKEKYDERLISQ) lie on the Cytoplasmic side of the membrane. The chain crosses the membrane as a helical span at residues 277–297 (IKMVTKVMFLYIPLPMFWALF). Residues 298 to 327 (DQQGSRWTLQATTMNGKIGAIEIQPDQMQT) are Extracellular-facing. Residues 328–348 (VNAILIVIMVPIVDAVVYPLI) form a helical membrane-spanning segment. The Cytoplasmic segment spans residues 349 to 361 (AKCGFNFTSLKKM). The chain crosses the membrane as a helical span at residues 362–382 (TVGMFLASMAFVVAAIVQVEI). Residues 383–585 (DKTLPVFPGG…PPNTVNMALQ (203 aa)) are Extracellular-facing. An extracellular domain (ECD) region spans residues 383–585 (DKTLPVFPGG…PPNTVNMALQ (203 aa)). Asn-406, Asn-439, Asn-515, and Asn-532 each carry an N-linked (GlcNAc...) asparagine glycan. A helical transmembrane segment spans residues 586 to 606 (IPQYFLLTCGEVVFSVTGLEF). Over 607–620 (SYSQAPSNMKSVLQ) the chain is Cytoplasmic. Residues 621–641 (AGWLLTVAVGNIIVLIVAGAG) traverse the membrane as a helical segment. Residues 642-646 (HFPKQ) lie on the Extracellular side of the membrane. A helical transmembrane segment spans residues 647-667 (WAEYILFASLLLVVCVIFAIM). Residues 668–709 (ARFYTYINPAEIEAQFDEDEKKKGIGKENPYSSLEPVSQTNM) lie on the Cytoplasmic side of the membrane. The interval 690-709 (KGIGKENPYSSLEPVSQTNM) is disordered. The segment covering 697–709 (PYSSLEPVSQTNM) has biased composition (polar residues).

Belongs to the major facilitator superfamily. Proton-dependent oligopeptide transporter (POT/PTR) (TC 2.A.17) family. As to quaternary structure, interacts (via extracellular domain region) with trypsin.

The protein resides in the apical cell membrane. The enzyme catalyses a dipeptide(out) + H(+)(out) = a dipeptide(in) + H(+)(in). It catalyses the reaction an L-amino acid tripeptide(out) + H(+)(out) = an L-amino acid tripeptide(in) + H(+)(in). The catalysed reaction is L-alanyl-L-lysine(out) + H(+)(out) = L-alanyl-L-lysine(in) + H(+)(in). It carries out the reaction L-alanyl-L-proline(out) + H(+)(out) = L-alanyl-L-proline(in) + H(+)(in). The enzyme catalyses L-alanyl-L-valine(out) + H(+)(out) = L-alanyl-L-valine(in) + H(+)(in). It catalyses the reaction carnosine(out) + H(+)(out) = carnosine(in) + H(+)(in). The catalysed reaction is glycyl-L-glutamine(out) + H(+)(out) = glycyl-L-glutamine(in) + H(+)(in). It carries out the reaction glycyl-L-leucine(out) + H(+)(out) = glycyl-L-leucine(in) + H(+)(in). The enzyme catalyses glycyl-L-proline(out) + H(+)(out) = glycyl-L-proline(in) + H(+)(in). It catalyses the reaction glycyl-sarcosine(out) + H(+)(out) = glycyl-sarcosine(in) + H(+)(in). The catalysed reaction is L-leucyl-L-leucine(out) + H(+)(out) = L-leucyl-L-leucine(in) + H(+)(in). It carries out the reaction L-leucyl-L-proline(out) + H(+)(out) = L-leucyl-L-proline(in) + H(+)(in). The enzyme catalyses L-phenylalanyl-L-leucine(out) + H(+)(out) = L-phenylalanyl-L-leucine(in) + H(+)(in). It catalyses the reaction L-phenylalanyl-L-phenylalanine(out) + H(+)(out) = L-phenylalanyl-L-phenylalanine(in) + H(+)(in). The catalysed reaction is L-lysyl-glycine(out) + H(+)(out) = L-lysyl-glycine(in) + H(+)(in). It carries out the reaction L-tyrosylglycine(out) + H(+)(out) = L-tyrosylglycine(in) + H(+)(in). The enzyme catalyses L-alanyl-L-aspartate(out) + 2 H(+)(out) = L-alanyl-L-aspartate(in) + 2 H(+)(in). It catalyses the reaction L-aspartyl-glycine(out) + 2 H(+)(out) = L-aspartyl-glycine(in) + 2 H(+)(in). The catalysed reaction is glycyl-L-aspartate(out) + 2 H(+)(out) = glycyl-L-aspartate(in) + 2 H(+)(in). It carries out the reaction glycyl-L-glutamate(out) + 2 H(+)(out) = glycyl-L-glutamate(in) + 2 H(+)(in). The enzyme catalyses L-alanyl-L-leucyl-L-alanine(out) + H(+)(out) = L-alanyl-L-leucyl-L-alanine(in) + H(+)(in). It catalyses the reaction L-alanyl-L-prolylglycine(out) + H(+)(out) = L-alanyl-L-prolylglycine(in) + H(+)(in). The catalysed reaction is glycylglycyl-L-isoleucine(out) + H(+)(out) = glycylglycyl-L-isoleucine(in) + H(+)(in). It carries out the reaction glycylglycyl-L-proline(out) + H(+)(out) = glycylglycyl-L-proline(in) + H(+)(in). The enzyme catalyses L-methionyl-L-phenylalanyl-L-methionine(out) + H(+)(out) = L-methionyl-L-phenylalanyl-L-methionine(in) + H(+)(in). It catalyses the reaction N-acetyl-D-muramoyl-L-alanyl-D-isoglutamine(out) + 2 H(+)(out) = N-acetyl-D-muramoyl-L-alanyl-D-isoglutamine(in) + 2 H(+)(in). The catalysed reaction is N(alpha)-formyl-L-methionyl-L-leucyl-L-phenylalanine(out) + 2 H(+)(out) = N(alpha)-formyl-L-methionyl-L-leucyl-L-phenylalanine(in) + 2 H(+)(in). Electrogenic proton-coupled amino-acid transporter that transports oligopeptides of 2 to 4 amino acids with a preference for dipeptides. Transports neutral and monovalently charged peptides with a proton to peptide stoichiometry of 1:1 or 2:1. Primarily responsible for the absorption of dietary di- and tripeptides from the small intestinal lumen. Mediates transepithelial transport of muramyl and N-formylated bacterial dipeptides contributing to recognition of pathogenic bacteria by the mucosal immune system. The polypeptide is Solute carrier family 15 member 1 (Mus musculus (Mouse)).